A 288-amino-acid chain; its full sequence is Elongation factor Ts (288 aa).

The tract at residues 82-85 is involved in Mg(2+) ion dislocation from EF-Tu; the sequence is TDFV.

It belongs to the EF-Ts family.

It is found in the cytoplasm. Functionally, associates with the EF-Tu.GDP complex and induces the exchange of GDP to GTP. It remains bound to the aminoacyl-tRNA.EF-Tu.GTP complex up to the GTP hydrolysis stage on the ribosome. The chain is Elongation factor Ts from Pelodictyon phaeoclathratiforme (strain DSM 5477 / BU-1).